Here is a 468-residue protein sequence, read N- to C-terminus: Ribosomal protein uS12 methylthiotransferase RimO (468 aa).

In terms of domain architecture, MTTase N-terminal spans 18 to 129 (PTVAFAHLGC…IVEVLERVEA (112 aa)). Residues cysteine 27, cysteine 63, cysteine 92, cysteine 167, cysteine 171, and cysteine 174 each contribute to the [4Fe-4S] cluster site. Residues 153 to 382 (TTGEAVAYLK…MTLQQPISAA (230 aa)) form the Radical SAM core domain. Residues 385-456 (ARWVGRTVDA…IYDLRAEIVG (72 aa)) enclose the TRAM domain.

The protein belongs to the methylthiotransferase family. RimO subfamily. The cofactor is [4Fe-4S] cluster.

The protein localises to the cytoplasm. It carries out the reaction L-aspartate(89)-[ribosomal protein uS12]-hydrogen + (sulfur carrier)-SH + AH2 + 2 S-adenosyl-L-methionine = 3-methylsulfanyl-L-aspartate(89)-[ribosomal protein uS12]-hydrogen + (sulfur carrier)-H + 5'-deoxyadenosine + L-methionine + A + S-adenosyl-L-homocysteine + 2 H(+). Catalyzes the methylthiolation of an aspartic acid residue of ribosomal protein uS12. This Synechococcus sp. (strain WH7803) protein is Ribosomal protein uS12 methylthiotransferase RimO.